The sequence spans 148 residues: D-aminoacyl-tRNA deacylase (148 aa).

Residues 137 to 138 (GP) carry the Gly-cisPro motif, important for rejection of L-amino acids motif.

This sequence belongs to the DTD family. Homodimer.

The protein resides in the cytoplasm. It catalyses the reaction glycyl-tRNA(Ala) + H2O = tRNA(Ala) + glycine + H(+). The catalysed reaction is a D-aminoacyl-tRNA + H2O = a tRNA + a D-alpha-amino acid + H(+). Its function is as follows. An aminoacyl-tRNA editing enzyme that deacylates mischarged D-aminoacyl-tRNAs. Also deacylates mischarged glycyl-tRNA(Ala), protecting cells against glycine mischarging by AlaRS. Acts via tRNA-based rather than protein-based catalysis; rejects L-amino acids rather than detecting D-amino acids in the active site. By recycling D-aminoacyl-tRNA to D-amino acids and free tRNA molecules, this enzyme counteracts the toxicity associated with the formation of D-aminoacyl-tRNA entities in vivo and helps enforce protein L-homochirality. This Lactiplantibacillus plantarum (strain ATCC BAA-793 / NCIMB 8826 / WCFS1) (Lactobacillus plantarum) protein is D-aminoacyl-tRNA deacylase.